Reading from the N-terminus, the 364-residue chain is Phosphate acyltransferase (364 aa).

The tract at residues 343-364 (IRTSGRSGGKSKSSAAREDGAA) is disordered.

This sequence belongs to the PlsX family. As to quaternary structure, homodimer. Probably interacts with PlsY.

The protein localises to the cytoplasm. It carries out the reaction a fatty acyl-[ACP] + phosphate = an acyl phosphate + holo-[ACP]. Its pathway is lipid metabolism; phospholipid metabolism. Functionally, catalyzes the reversible formation of acyl-phosphate (acyl-PO(4)) from acyl-[acyl-carrier-protein] (acyl-ACP). This enzyme utilizes acyl-ACP as fatty acyl donor, but not acyl-CoA. In Novosphingobium aromaticivorans (strain ATCC 700278 / DSM 12444 / CCUG 56034 / CIP 105152 / NBRC 16084 / F199), this protein is Phosphate acyltransferase.